The sequence spans 294 residues: ATP synthase gamma chain (294 aa).

This sequence belongs to the ATPase gamma chain family. F-type ATPases have 2 components, CF(1) - the catalytic core - and CF(0) - the membrane proton channel. CF(1) has five subunits: alpha(3), beta(3), gamma(1), delta(1), epsilon(1). CF(0) has three main subunits: a, b and c.

The protein localises to the cell inner membrane. Functionally, produces ATP from ADP in the presence of a proton gradient across the membrane. The gamma chain is believed to be important in regulating ATPase activity and the flow of protons through the CF(0) complex. In Mesorhizobium japonicum (strain LMG 29417 / CECT 9101 / MAFF 303099) (Mesorhizobium loti (strain MAFF 303099)), this protein is ATP synthase gamma chain.